Here is a 144-residue protein sequence, read N- to C-terminus: IgW chain C region, secreted form 1/3 (144 aa).

The Ig-like domain maps to V1–S82. Residues N3, N43, and N123 are each glycosylated (N-linked (GlcNAc...) asparagine). The cysteines at positions 11 and 68 are disulfide-linked. Residues K87 to K144 are secretory tail.

In terms of tissue distribution, expressed mainly in lymphoid tissues including spleen, epigonal organ and circulating lymphocytes.

The protein localises to the secreted. The polypeptide is IgW chain C region, secreted form 1/3 (Heterodontus francisci (Horn shark)).